The chain runs to 315 residues: Cytochrome c biogenesis protein CcsA (315 aa).

7 consecutive transmembrane segments (helical) span residues 17 to 37, 72 to 92, 101 to 121, 146 to 166, 221 to 241, 255 to 272, and 282 to 302; these read LGFAAFLFLLMALPISFWAVA, ISNLYESLCFLTWGCTLAQLF, IVSAVATPVSLLSIGFASFVL, VIMCSYAALLIGSILSFGVFL, SITAGFLLLTVGLISGAVWAN, TWALICWLVYAAYLHTRI, and AILAIAGFFVIIVCYIGVNLL.

It belongs to the CcmF/CycK/Ccl1/NrfE/CcsA family. In terms of assembly, may interact with ccs1.

Its subcellular location is the cellular thylakoid membrane. Required during biogenesis of c-type cytochromes (cytochrome c6 and cytochrome f) at the step of heme attachment. This is Cytochrome c biogenesis protein CcsA from Prochlorococcus marinus (strain NATL2A).